An 86-amino-acid polypeptide reads, in one-letter code: High affinity immunoglobulin epsilon receptor subunit gamma (86 aa).

Positions 1 to 18 (MISAVILFLLLLVEQAAA) are cleaved as a signal peptide. Residues 19 to 23 (LGEPQ) are Extracellular-facing. A helical membrane pass occupies residues 24–44 (LCYILDAVLFLYGIVLTLLYC). Over 45 to 86 (RLKIQVRKAAIASREKADAVYTGLNTRSQETYETLKHEKPPQ) the chain is Cytoplasmic. Residues 54–82 (AIASREKADAVYTGLNTRSQETYETLKHE) enclose the ITAM domain. A phosphotyrosine mark is found at Tyr65 and Tyr76. Position 78 is a phosphothreonine (Thr78).

It belongs to the CD3Z/FCER1G family. In terms of assembly, igE Fc receptor is a tetramer of an alpha chain, a beta chain, and two disulfide linked gamma chains. Associates with FCGR1A; forms a functional signaling complex. The signaling subunit of immunoglobulin gamma (IgG) Fc receptor complex. As a homodimer or a heterodimer of CD247 and FCER1G, associates with the ligand binding subunit FCGR3A to form a functional receptor complex. Associates with CLEC6A. Interacts with CLEC4E. Interacts (via ITAM domain) with SYK (via SH2 domains); activates SYK, enabling integrin-mediated activation of neutrophils and macrophages. Interacts with CSF2RB and recruits SYK in response to IL3 stimulation; this interaction is direct. Interacts with CD300LH; the interaction may be indirect. Interacts with CD300LD. Interacts with TARM1. Expressed in mast cells (at protein level). Expressed in basophils (at protein level).

The protein localises to the cell membrane. In terms of biological role, adapter protein containing an immunoreceptor tyrosine-based activation motif (ITAM) that transduces activation signals from various immunoreceptors. As a component of the high-affinity immunoglobulin E (IgE) receptor, mediates allergic inflammatory signaling in mast cells. As a constitutive component of interleukin-3 receptor complex, selectively mediates interleukin 4/IL4 production by basophils, priming T-cells toward effector T-helper 2 subset. Associates with pattern recognition receptors CLEC4D and CLEC4E to form a functional signaling complex in myeloid cells. Binding of mycobacterial trehalose 6,6'-dimycolate (TDM) to this receptor complex leads to phosphorylation of ITAM, triggering activation of SYK, CARD9 and NF-kappa-B, consequently driving maturation of antigen-presenting cells and shaping antigen-specific priming of T-cells toward effector T-helper 1 and T-helper 17 cell subtypes. May function cooperatively with other activating receptors. Functionally linked to integrin beta-2/ITGB2-mediated neutrophil activation. Also involved in integrin alpha-2/ITGA2-mediated platelet activation. This is High affinity immunoglobulin epsilon receptor subunit gamma from Mus musculus (Mouse).